The sequence spans 672 residues: GPI mannosyltransferase pigv-1 (672 aa).

The Cytoplasmic portion of the chain corresponds to 1 to 134 (MRRREPGRDV…TQRCLGFCFR (134 aa)). Over residues 82-94 (REESDSSSSREDS) the composition is skewed to basic and acidic residues. Residues 82–115 (REESDSSSSREDSPLGSTETGESCSTTDDEESKE) are disordered. Residues 97 to 107 (GSTETGESCST) show a composition bias toward low complexity. Residues 135–155 (QLFFSRMWVFILQFIASYYAG) traverse the membrane as a helical segment. Residues 156–239 (DRFRTDGFNL…NGMESVFGWT (84 aa)) lie on the Extracellular side of the membrane. Residues 240 to 260 (FPPWVTITLAAVFVNLFCFLL) form a helical membrane-spanning segment. At 261 to 277 (CGMTLYQVVLIMTRSVK) the chain is on the cytoplasmic side. A run of 2 helical transmembrane segments spans residues 278 to 298 (ISLL…FSSA) and 299 to 319 (YSES…LFGL). Over 320–345 (RGKGFWHRMLKGFTGTICFGLTFAVR) the chain is Extracellular. A helical transmembrane segment spans residues 346–366 (SNGLLNFLYVAWIWCGTLLWD). The Cytoplasmic segment spans residues 367–423 (EEMPIPDCHKLISTLAATKNERYKQEWQAKFWRFQQKRKQNRKVFRWTDPNFSRCVT). A helical membrane pass occupies residues 424 to 444 (LFIVIVCAISATLLFFTPYVF). The Extracellular segment spans residues 445-520 (MTNFTADEFC…WSVKFFGYWK (76 aa)). The chain crosses the membrane as a helical span at residues 521-541 (IKKIPCFLMMLPAAILTVLAI). Residues 542 to 569 (KSSWNDVFLNKRWNNIWVLTARSDHSLP) are Cytoplasmic-facing. The chain crosses the membrane as a helical span at residues 570–590 (MAIHSSVLLFVAIFYINSEVF). Topologically, residues 591–592 (TR) are extracellular. Residues 593–613 (IIFSSSPFIYIYIATYIDKLT) traverse the membrane as a helical segment. Over 614–648 (QGTIAGNRLWQYFESPGILPFFVFRRVWQDGWRGK) the chain is Cytoplasmic. Residues 649-669 (LLYIYILGYFVFGTMAHSAWL) traverse the membrane as a helical segment. The Extracellular portion of the chain corresponds to 670-672 (PFT).

It belongs to the PIGV family. In terms of tissue distribution, expressed in epithelial tissues including the epidermis, pharynx, intestine, rectum and excretory cell during embryogenesis.

It localises to the endoplasmic reticulum membrane. Its pathway is glycolipid biosynthesis; glycosylphosphatidylinositol-anchor biosynthesis. Functionally, alpha-1,6-mannosyltransferase involved in glycosylphosphatidylinositol-anchor biosynthesis. Transfers the second mannose to the glycosylphosphatidylinositol during GPI precursor assembly. Required for maintenance of epithelial integrity during embryogenesis. This Caenorhabditis elegans protein is GPI mannosyltransferase pigv-1.